Reading from the N-terminus, the 191-residue chain is Leucyl/phenylalanyl-tRNA--protein transferase (191 aa).

It belongs to the L/F-transferase family.

The protein localises to the cytoplasm. It carries out the reaction N-terminal L-lysyl-[protein] + L-leucyl-tRNA(Leu) = N-terminal L-leucyl-L-lysyl-[protein] + tRNA(Leu) + H(+). The catalysed reaction is N-terminal L-arginyl-[protein] + L-leucyl-tRNA(Leu) = N-terminal L-leucyl-L-arginyl-[protein] + tRNA(Leu) + H(+). The enzyme catalyses L-phenylalanyl-tRNA(Phe) + an N-terminal L-alpha-aminoacyl-[protein] = an N-terminal L-phenylalanyl-L-alpha-aminoacyl-[protein] + tRNA(Phe). Functionally, functions in the N-end rule pathway of protein degradation where it conjugates Leu, Phe and, less efficiently, Met from aminoacyl-tRNAs to the N-termini of proteins containing an N-terminal arginine or lysine. The polypeptide is Leucyl/phenylalanyl-tRNA--protein transferase (Nostoc punctiforme (strain ATCC 29133 / PCC 73102)).